Reading from the N-terminus, the 306-residue chain is Curved DNA-binding protein (306 aa).

In terms of domain architecture, J spans 5–69 (DYYAIMGVKP…QRRAEYDQMW (65 aa)).

Its subcellular location is the cytoplasm. The protein resides in the nucleoid. DNA-binding protein that preferentially recognizes a curved DNA sequence. It is probably a functional analog of DnaJ; displays overlapping activities with DnaJ, but functions under different conditions, probably acting as a molecular chaperone in an adaptive response to environmental stresses other than heat shock. Lacks autonomous chaperone activity; binds native substrates and targets them for recognition by DnaK. Its activity is inhibited by the binding of CbpM. This Escherichia coli (strain 55989 / EAEC) protein is Curved DNA-binding protein.